Reading from the N-terminus, the 68-residue chain is Protein SlyX homolog (68 aa).

The protein belongs to the SlyX family.

In Brucella anthropi (strain ATCC 49188 / DSM 6882 / CCUG 24695 / JCM 21032 / LMG 3331 / NBRC 15819 / NCTC 12168 / Alc 37) (Ochrobactrum anthropi), this protein is Protein SlyX homolog.